We begin with the raw amino-acid sequence, 290 residues long: ATP synthase gamma chain (290 aa).

The protein belongs to the ATPase gamma chain family. As to quaternary structure, F-type ATPases have 2 components, CF(1) - the catalytic core - and CF(0) - the membrane proton channel. CF(1) has five subunits: alpha(3), beta(3), gamma(1), delta(1), epsilon(1). CF(0) has three main subunits: a, b and c.

It localises to the cell membrane. Produces ATP from ADP in the presence of a proton gradient across the membrane. The gamma chain is believed to be important in regulating ATPase activity and the flow of protons through the CF(0) complex. This is ATP synthase gamma chain from Akkermansia muciniphila (strain ATCC BAA-835 / DSM 22959 / JCM 33894 / BCRC 81048 / CCUG 64013 / CIP 107961 / Muc).